The primary structure comprises 154 residues: Myoglobin (154 aa).

Positions 2–148 (GLSDGEWQLV…FRNDIAAKYK (147 aa)) constitute a Globin domain. Phosphoserine is present on Ser4. His65 contacts nitrite. Residue His65 participates in O2 binding. Residue Thr68 is modified to Phosphothreonine. A heme b-binding site is contributed by His94.

This sequence belongs to the globin family. In terms of assembly, monomeric.

It localises to the cytoplasm. Its subcellular location is the sarcoplasm. It catalyses the reaction Fe(III)-heme b-[protein] + nitric oxide + H2O = Fe(II)-heme b-[protein] + nitrite + 2 H(+). The catalysed reaction is H2O2 + AH2 = A + 2 H2O. Monomeric heme protein which primary function is to store oxygen and facilitate its diffusion within muscle tissues. Reversibly binds oxygen through a pentacoordinated heme iron and enables its timely and efficient release as needed during periods of heightened demand. Depending on the oxidative conditions of tissues and cells, and in addition to its ability to bind oxygen, it also has a nitrite reductase activity whereby it regulates the production of bioactive nitric oxide. Under stress conditions, like hypoxia and anoxia, it also protects cells against reactive oxygen species thanks to its pseudoperoxidase activity. This chain is Myoglobin (MB), found in Spalax ehrenbergi (Middle East blind mole rat).